A 132-amino-acid polypeptide reads, in one-letter code: Riboflavin kinase (132 aa).

13 to 18 lines the CDP pocket; it reads GLGHGS. The Mg(2+) site is built by threonine 40 and asparagine 42. Positions 98 and 106 each coordinate FMN. 111–114 contacts CDP; sequence VYLR.

Belongs to the archaeal riboflavin kinase family. Requires Mg(2+) as cofactor.

It catalyses the reaction riboflavin + CTP = CDP + FMN + H(+). The protein operates within cofactor biosynthesis; FMN biosynthesis; FMN from riboflavin (CTP route): step 1/1. Its function is as follows. Catalyzes the CTP-dependent phosphorylation of riboflavin (vitamin B2) to form flavin mononucleotide (FMN). This is Riboflavin kinase from Aeropyrum pernix (strain ATCC 700893 / DSM 11879 / JCM 9820 / NBRC 100138 / K1).